A 115-amino-acid polypeptide reads, in one-letter code: Hydrogenase maturation factor HypA (115 aa).

Residue histidine 2 coordinates Ni(2+). Cysteine 74, cysteine 77, cysteine 90, and cysteine 93 together coordinate Zn(2+).

Belongs to the HypA/HybF family.

Involved in the maturation of [NiFe] hydrogenases. Required for nickel insertion into the metal center of the hydrogenase. The protein is Hydrogenase maturation factor HypA of Desulfosudis oleivorans (strain DSM 6200 / JCM 39069 / Hxd3) (Desulfococcus oleovorans).